Consider the following 365-residue polypeptide: Phospho-N-acetylmuramoyl-pentapeptide-transferase (365 aa).

10 helical membrane-spanning segments follow: residues 22 to 42 (YISV…LALG), 74 to 94 (TMGG…WGDL), 95 to 115 (TSIY…IGFF), 133 to 153 (YKFA…FYLL), 168 to 188 (SLYI…IING), 201 to 221 (GLAI…AYIE), 240 to 260 (LAEV…FLWF), 267 to 287 (VFMG…IAVM), 292 to 312 (LIFF…MLQV), and 342 to 362 (KVVI…LAAI).

This sequence belongs to the glycosyltransferase 4 family. MraY subfamily. Requires Mg(2+) as cofactor.

It is found in the cell inner membrane. It carries out the reaction UDP-N-acetyl-alpha-D-muramoyl-L-alanyl-gamma-D-glutamyl-meso-2,6-diaminopimeloyl-D-alanyl-D-alanine + di-trans,octa-cis-undecaprenyl phosphate = di-trans,octa-cis-undecaprenyl diphospho-N-acetyl-alpha-D-muramoyl-L-alanyl-D-glutamyl-meso-2,6-diaminopimeloyl-D-alanyl-D-alanine + UMP. It participates in cell wall biogenesis; peptidoglycan biosynthesis. In terms of biological role, catalyzes the initial step of the lipid cycle reactions in the biosynthesis of the cell wall peptidoglycan: transfers peptidoglycan precursor phospho-MurNAc-pentapeptide from UDP-MurNAc-pentapeptide onto the lipid carrier undecaprenyl phosphate, yielding undecaprenyl-pyrophosphoryl-MurNAc-pentapeptide, known as lipid I. The chain is Phospho-N-acetylmuramoyl-pentapeptide-transferase from Francisella tularensis subsp. tularensis (strain FSC 198).